We begin with the raw amino-acid sequence, 564 residues long: 2-succinyl-5-enolpyruvyl-6-hydroxy-3-cyclohexene-1-carboxylate synthase (564 aa).

This sequence belongs to the TPP enzyme family. MenD subfamily. Homodimer. Requires Mg(2+) as cofactor. The cofactor is Mn(2+). It depends on thiamine diphosphate as a cofactor.

The catalysed reaction is isochorismate + 2-oxoglutarate + H(+) = 5-enolpyruvoyl-6-hydroxy-2-succinyl-cyclohex-3-ene-1-carboxylate + CO2. It functions in the pathway quinol/quinone metabolism; 1,4-dihydroxy-2-naphthoate biosynthesis; 1,4-dihydroxy-2-naphthoate from chorismate: step 2/7. The protein operates within quinol/quinone metabolism; menaquinone biosynthesis. Functionally, catalyzes the thiamine diphosphate-dependent decarboxylation of 2-oxoglutarate and the subsequent addition of the resulting succinic semialdehyde-thiamine pyrophosphate anion to isochorismate to yield 2-succinyl-5-enolpyruvyl-6-hydroxy-3-cyclohexene-1-carboxylate (SEPHCHC). The chain is 2-succinyl-5-enolpyruvyl-6-hydroxy-3-cyclohexene-1-carboxylate synthase from Photorhabdus laumondii subsp. laumondii (strain DSM 15139 / CIP 105565 / TT01) (Photorhabdus luminescens subsp. laumondii).